A 352-amino-acid polypeptide reads, in one-letter code: Proton-activated chloride channel (352 aa).

A disordered region spans residues 1 to 55; that stretch reads MEAIRKELSRSYQELNEEAEPVAIDPEEAEDEEKEQEEAASAVAPDRDSDRSSPP. At 1–65 the chain is on the cytoplasmic side; the sequence is MEAIRKELSR…VRFSRTCLKN (65 aa). Positions 15-38 are enriched in acidic residues; sequence LNEEAEPVAIDPEEAEDEEKEQEE. Residues 66–86 traverse the membrane as a helical segment; that stretch reads FFSVLLILVYLLLMGVAVFLV. Over 87-299 the chain is Extracellular; the sequence is YQTITDFRDK…KDPYIQEIQD (213 aa). A helical transmembrane segment spans residues 300 to 320; that stretch reads IITANPWSMIALLCSVFLVLF. Residues 321 to 352 are Cytoplasmic-facing; that stretch reads KAADFAKLSVKWMIKVRRRHLKKRARELNHIS.

It belongs to the proton-activated chloride channel family.

It is found in the cell membrane. The enzyme catalyses chloride(in) = chloride(out). In terms of biological role, chloride channel gated by pH that facilitates the entry of chloride ions into cells upon exposure to extracellular acidic pH. In Xenopus tropicalis (Western clawed frog), this protein is Proton-activated chloride channel.